The following is a 174-amino-acid chain: Large ribosomal subunit protein uL10 (174 aa).

This sequence belongs to the universal ribosomal protein uL10 family. In terms of assembly, part of the ribosomal stalk of the 50S ribosomal subunit. The N-terminus interacts with L11 and the large rRNA to form the base of the stalk. The C-terminus forms an elongated spine to which L12 dimers bind in a sequential fashion forming a multimeric L10(L12)X complex.

In terms of biological role, forms part of the ribosomal stalk, playing a central role in the interaction of the ribosome with GTP-bound translation factors. The chain is Large ribosomal subunit protein uL10 from Trichlorobacter lovleyi (strain ATCC BAA-1151 / DSM 17278 / SZ) (Geobacter lovleyi).